The primary structure comprises 194 residues: Putative L,D-transpeptidase YciB (194 aa).

Residues 1-19 (MKLSLFIIAVLMPVILLSA) form the signal peptide. Cys-20 is lipidated: N-palmitoyl cysteine. Cys-20 is lipidated: S-diacylglycerol cysteine. Residues 68–194 (VWIDVNVKEQ…IPEHTKVVIS (127 aa)) enclose the L,D-TPase catalytic domain. The active-site Proton donor/acceptor is the His-144. The active-site Nucleophile is the Cys-170.

This sequence belongs to the YkuD family.

It is found in the cell membrane. It participates in cell wall biogenesis; peptidoglycan biosynthesis. This chain is Putative L,D-transpeptidase YciB (yciB), found in Bacillus subtilis (strain 168).